A 277-amino-acid polypeptide reads, in one-letter code: Urease accessory protein UreD (277 aa).

This sequence belongs to the UreD family. As to quaternary structure, ureD, UreF and UreG form a complex that acts as a GTP-hydrolysis-dependent molecular chaperone, activating the urease apoprotein by helping to assemble the nickel containing metallocenter of UreC. The UreE protein probably delivers the nickel.

The protein resides in the cytoplasm. Functionally, required for maturation of urease via the functional incorporation of the urease nickel metallocenter. This is Urease accessory protein UreD from Flavobacterium johnsoniae (strain ATCC 17061 / DSM 2064 / JCM 8514 / BCRC 14874 / CCUG 350202 / NBRC 14942 / NCIMB 11054 / UW101) (Cytophaga johnsonae).